We begin with the raw amino-acid sequence, 491 residues long: Keratin, type I cytoskeletal 39 (491 aa).

The interval 1 to 96 (MDTKGCTTTN…WYGEGINSNE (96 aa)) is head. Positions 96 to 407 (EKETMQILNE…SLLESSDGKR (312 aa)) constitute an IF rod domain. Positions 97 to 131 (KETMQILNERLANYLQKVRMLERENAELESKIQEE) are coil 1A. Residues 132 to 142 (SNKELPVLCPD) form a linker 1 region. The tract at residues 143–243 (YLSYYTTIEE…HKEEINSLQC (101 aa)) is coil 1B. The interval 244 to 259 (QLGERLDIEVTAAPSA) is linker 12. The tract at residues 260-403 (DLNQVLQEMR…TTYRSLLESS (144 aa)) is coil 2. The segment at 404–491 (DGKRPCYPRA…PCFIIRPAKV (88 aa)) is tail.

Belongs to the intermediate filament family. In terms of assembly, heterotetramer of two type I and two type II keratins. Expressed in skin and scalp. In the hair follicle, it is present in the upper hair cuticle and the upper cortex. Also present in the in the upper portion of beard hairs (at protein level).

In terms of biological role, may play a role in late hair differentiation. The protein is Keratin, type I cytoskeletal 39 (KRT39) of Homo sapiens (Human).